The primary structure comprises 360 residues: Abhydrolase domain-containing protein lid-1 (360 aa).

An AB hydrolase-1 domain is found at 73 to 203 (AIVFIPGLGA…MSFLGGVAGY (131 aa)).

The protein belongs to the peptidase S33 family. ABHD4/ABHD5 subfamily. Interacts with atgl-1.

The protein resides in the lipid droplet. Its function is as follows. Acts coordinately with atgl-1 within the lipolytic cascade to distribute stored energy to tissues during nutritional deprivation. This is Abhydrolase domain-containing protein lid-1 from Caenorhabditis elegans.